The following is a 294-amino-acid chain: Transmembrane protein 178B (294 aa).

The N-terminal stretch at 1-23 is a signal peptide; it reads MAAGKLLLYAGLSLSLCALGMLA. Helical transmembrane passes span 172 to 192, 206 to 226, and 252 to 272; these read AGFM…GMLG, LLFL…VAGI, and MFCA…CTLA.

This sequence belongs to the TMEM178 family.

The protein resides in the membrane. The sequence is that of Transmembrane protein 178B (tmem178b) from Danio rerio (Zebrafish).